Consider the following 328-residue polypeptide: 5,10-methylenetetrahydromethanopterin reductase (328 aa).

Belongs to the mer family.

It localises to the cytoplasm. It carries out the reaction 5-methyl-5,6,7,8-tetrahydromethanopterin + oxidized coenzyme F420-(gamma-L-Glu)(n) + H(+) = 5,10-methylenetetrahydromethanopterin + reduced coenzyme F420-(gamma-L-Glu)(n). Its pathway is one-carbon metabolism; methanogenesis from CO(2); methyl-coenzyme M from 5,10-methylene-5,6,7,8-tetrahydromethanopterin: step 1/2. Its function is as follows. Catalyzes the reversible reduction of methylene-H(4)MPT to methyl-H(4)MPT. The chain is 5,10-methylenetetrahydromethanopterin reductase from Methanosarcina mazei (strain ATCC BAA-159 / DSM 3647 / Goe1 / Go1 / JCM 11833 / OCM 88) (Methanosarcina frisia).